We begin with the raw amino-acid sequence, 75 residues long: Small integral membrane protein 7 (75 aa).

A signal peptide spans 1–17 (MIGDILLFGTLLMNAGA). The Extracellular portion of the chain corresponds to 18-53 (VLNFKLKKKDTQGFGEESREPSTGDNIREFLLSLRY). The chain crosses the membrane as a helical span at residues 54 to 74 (FRIFIALWNIFMMFCMIVLFG). S75 is a topological domain (cytoplasmic).

It belongs to the SMIM7 family.

Its subcellular location is the membrane. The protein is Small integral membrane protein 7 (SMIM7) of Homo sapiens (Human).